Here is a 232-residue protein sequence, read N- to C-terminus: Small ribosomal subunit protein uS3 (232 aa).

A KH type-2 domain is found at 39–107 (IRAILHKELK…DVVINIVEIR (69 aa)).

It belongs to the universal ribosomal protein uS3 family. In terms of assembly, part of the 30S ribosomal subunit. Forms a tight complex with proteins S10 and S14.

Binds the lower part of the 30S subunit head. Binds mRNA in the 70S ribosome, positioning it for translation. The protein is Small ribosomal subunit protein uS3 of Rhodopseudomonas palustris (strain BisA53).